Here is a 328-residue protein sequence, read N- to C-terminus: Gonadotropin-releasing hormone receptor (328 aa).

At 1–38 the chain is on the extracellular side; the sequence is MANSASPEQNQNHCSAINSSILLTQGNLPTLTLSGKIR. Asn-18 carries an N-linked (GlcNAc...) asparagine glycan. Residues 39-58 traverse the membrane as a helical segment; it reads VTVTFFLFLLSTAFNASFLL. Topologically, residues 59-77 are cytoplasmic; that stretch reads KLQKWTQRKEKGKKLSRMK. Residues 78 to 97 form a helical membrane-spanning segment; sequence VLLKHLTLANLLETLIVMPL. The Extracellular segment spans residues 98-115; the sequence is DGMWNITVQWYAGEFLCK. N-linked (GlcNAc...) asparagine glycosylation occurs at Asn-102. A disulfide bridge connects residues Cys-114 and Cys-196. A helical membrane pass occupies residues 116–137; sequence VLSYLKLFSMYAPAFMMVVISL. Residues 138 to 164 are Cytoplasmic-facing; the sequence is DRSLAITRPLAVKSNSRLGRFMIGLAW. The helical transmembrane segment at 165-184 threads the bilayer; sequence LLSSIFAGPQLYIFRMIHLA. At 185-212 the chain is on the extracellular side; that stretch reads DSSGQTEGFSQCVTHGSFPQWWHQAFYN. A helical membrane pass occupies residues 213 to 232; it reads FFTFSCLFIIPLLIMLICNA. Topologically, residues 233–281 are cytoplasmic; that stretch reads KIMFTLTRVLQQDPHNLQLNQSKNNIPRARLRTLKMTVAFAASFIVCWT. Residues 282-300 form a helical membrane-spanning segment; sequence PYYVLGIWYWFDPEMVNRV. The Extracellular segment spans residues 301 to 306; the sequence is SDPVNH. A helical transmembrane segment spans residues 307–326; sequence FFFLFAFLNPCFDPLIYGYF. The Cytoplasmic portion of the chain corresponds to 327–328; it reads SL.

It belongs to the G-protein coupled receptor 1 family. Pituitary gland.

The protein resides in the cell membrane. In terms of biological role, receptor for gonadotropin releasing hormone (GnRH) that mediates the action of GnRH to stimulate the secretion of the gonadotropic hormones luteinizing hormone (LH) and follicle-stimulating hormone (FSH). This receptor mediates its action by association with G-proteins that activate a phosphatidylinositol-calcium second messenger system. This is Gonadotropin-releasing hormone receptor (GNRHR) from Sus scrofa (Pig).